A 279-amino-acid polypeptide reads, in one-letter code: uncharacterized protein (279 aa).

3 stretches are compositionally biased toward low complexity: residues 1–25 (MNENNKNNSSEDLNNNNNNNNNNNN), 86–151 (PSQS…NGNN), and 232–250 (NKNNNNNNNNDNNNNDDNN). Disordered regions lie at residues 1–27 (MNENNKNNSSEDLNNNNNNNNNNNNIK), 83–153 (NLFP…NNID), and 213–260 (QSVN…KVKS).

This is an uncharacterized protein from Dictyostelium discoideum (Social amoeba).